The following is a 176-amino-acid chain: Ribosome rescue factor SmrB (176 aa).

The region spanning 93–168 (LDLHGYRQSE…GDAALLVLID (76 aa)) is the Smr domain.

Belongs to the SmrB family. In terms of assembly, associates with collided ribosomes, but not with correctly translating polysomes.

Its function is as follows. Acts as a ribosome collision sensor. Detects stalled/collided disomes (pairs of ribosomes where the leading ribosome is stalled and a second ribosome has collided with it) and endonucleolytically cleaves mRNA at the 5' boundary of the stalled ribosome. Stalled/collided disomes form a new interface (primarily via the 30S subunits) that binds SmrB. Cleaved mRNA becomes available for tmRNA ligation, leading to ribosomal subunit dissociation and rescue of stalled ribosomes. In Shewanella oneidensis (strain ATCC 700550 / JCM 31522 / CIP 106686 / LMG 19005 / NCIMB 14063 / MR-1), this protein is Ribosome rescue factor SmrB.